A 208-amino-acid chain; its full sequence is 2-phospho-L-lactate guanylyltransferase (208 aa).

Belongs to the CofC family. As to quaternary structure, homodimer.

The catalysed reaction is (2S)-2-phospholactate + GTP + H(+) = (2S)-lactyl-2-diphospho-5'-guanosine + diphosphate. The protein operates within cofactor biosynthesis; coenzyme F420 biosynthesis. Functionally, guanylyltransferase that catalyzes the activation of (2S)-2-phospholactate (2-PL) as (2S)-lactyl-2-diphospho-5'-guanosine, via the condensation of 2-PL with GTP. It is involved in the biosynthesis of coenzyme F420, a hydride carrier cofactor. This chain is 2-phospho-L-lactate guanylyltransferase, found in Methanosarcina acetivorans (strain ATCC 35395 / DSM 2834 / JCM 12185 / C2A).